A 339-amino-acid polypeptide reads, in one-letter code: 4-hydroxy-2-oxovalerate aldolase (339 aa).

The region spanning 8-260 is the Pyruvate carboxyltransferase domain; it reads IILHDMCLRD…STDVDVFKLM (253 aa). Residue 16–17 participates in substrate binding; it reads RD. Aspartate 17 is a Mn(2+) binding site. Residue histidine 20 is the Proton acceptor of the active site. 2 residues coordinate substrate: serine 170 and histidine 199. Mn(2+) is bound by residues histidine 199 and histidine 201. Tyrosine 290 provides a ligand contact to substrate.

The protein belongs to the 4-hydroxy-2-oxovalerate aldolase family.

It carries out the reaction (S)-4-hydroxy-2-oxopentanoate = acetaldehyde + pyruvate. This is 4-hydroxy-2-oxovalerate aldolase from Shewanella woodyi (strain ATCC 51908 / MS32).